The primary structure comprises 252 residues: MSNQDPHHQRDSLFATPIANLGDWRFDERVAEVFPDMIQRSVPGYSNIVSMIGMLAGRFVTSNSQIYDMGCSLGASTLAMRRNIVAENCKIIAVDNSPAMVERCRRHIDAFRSQTPVEVIEADILNIDIQNASMVVLNFTLQFLNPQDRQGLLNRIYQGLRPGGVLVLSEKFSFEDQQIGELLFNMHHDFKRANGYSELEISQKRSMLENVMLTDSVETHKSRLHQSGFNHVEVWFQCFNFGSLLAIKGADE.

S-adenosyl-L-methionine-binding positions include Tyr-45, 70-72, 95-96, 123-124, Asn-138, and Arg-205; these read GCS, DN, and DI.

It belongs to the class I-like SAM-binding methyltransferase superfamily. Cx-SAM synthase family. Homodimer.

It catalyses the reaction prephenate + S-adenosyl-L-methionine = carboxy-S-adenosyl-L-methionine + 3-phenylpyruvate + H2O. In terms of biological role, catalyzes the conversion of S-adenosyl-L-methionine (SAM) to carboxy-S-adenosyl-L-methionine (Cx-SAM). This is Carboxy-S-adenosyl-L-methionine synthase from Photorhabdus laumondii subsp. laumondii (strain DSM 15139 / CIP 105565 / TT01) (Photorhabdus luminescens subsp. laumondii).